The following is a 492-amino-acid chain: JmjC domain-containing histone demethylation protein 1 (492 aa).

The PHD-type; atypical zinc-finger motif lies at 4–72; sequence PNICQHCQLK…SYRCPNHKEG (69 aa). Positions 254 to 409 constitute a JmjC domain; it reads TAVRQNDLVD…THLKIVEIEK (156 aa). Thr302 contacts substrate. Positions 305 and 307 each coordinate Fe cation. Residue Lys322 coordinates substrate. His377 contacts Fe cation.

Belongs to the JHDM1 histone demethylase family. It depends on Fe(2+) as a cofactor.

Its subcellular location is the nucleus. It carries out the reaction N(6),N(6)-dimethyl-L-lysyl(36)-[histone H3] + 2 2-oxoglutarate + 2 O2 = L-lysyl(36)-[histone H3] + 2 formaldehyde + 2 succinate + 2 CO2. Its function is as follows. Histone demethylase that specifically demethylates 'Lys-36' of histone H3, thereby playing a central role in histone code. Does not demethylate H3 'Lys-4' nor 'Lys-79'. In Saccharomyces cerevisiae (strain ATCC 204508 / S288c) (Baker's yeast), this protein is JmjC domain-containing histone demethylation protein 1 (JHD1).